Consider the following 115-residue polypeptide: Toxin-like structure LSTX-R1 (115 aa).

The signal sequence occupies residues 1–18 (MKLSLIIIATSLVIAVVA). Positions 19–51 (FPSKDSAATDFDKTESLENVEERVETALDERPR) are excised as a propeptide.

The protein belongs to the neurotoxin 25 family. F7 subfamily. In terms of processing, contains 4 disulfide bonds. In terms of tissue distribution, expressed by the venom gland.

The protein localises to the secreted. The protein is Toxin-like structure LSTX-R1 of Lycosa singoriensis (Wolf spider).